The sequence spans 421 residues: MTQTLSLRAVLCATTLVSPFLAQAATESEVEALKKELLELRQRYEAQQNALMVLEQRVRQVEAQPQAPQPQRLVKSIQPPAQARNDANAVAGTYGASLKDDGAPAPSVENIYQDASGFFGGGTFSLETGLTYSHYDTRQLFLNGFLALDSIFLGNIGVDQIDADIWTLDLTGRYNWNQRWQVDINAPVVYRESTYQSAGAGGSTSQITEKSVTGDPRLGDVSFGVAYKFLDESESTPDAVVSLRVKAPTGKDPYGIKLKQVPGNNNLNVPDDLPTGNGVWSITPGISLVKTVDPAVLFGSLSYTYNFEESFDDINPQQGVKTGGKVKLGNWFQLGVGVAFALNEKMSMSFSFSELISQKSKVKQDGQSWQTVSGSDANAGYFGLGMTYAVSNRFSIVPSLSIGITPDAPDFTFGVKFPYYF.

The N-terminal stretch at 1–24 is a signal peptide; it reads MTQTLSLRAVLCATTLVSPFLAQA. The stretch at 23-64 forms a coiled coil; it reads QAATESEVEALKKELLELRQRYEAQQNALMVLEQRVRQVEAQ.

Belongs to the amyloid transporter (TC 9.B.153) family.

It localises to the secreted. It is found in the cell surface. The protein localises to the cell outer membrane. Transports fibril components across the outer membrane. Upon overexpression of the endogenous six-gene locus (fapA-fapF), cells form large clumps during liquid growth, make large amounts of biofilm and produce amyloid fibrils. This chain is Functional amyloid transporter FapF, found in Pseudomonas aeruginosa (strain ATCC 15692 / DSM 22644 / CIP 104116 / JCM 14847 / LMG 12228 / 1C / PRS 101 / PAO1).